A 389-amino-acid polypeptide reads, in one-letter code: Cytochrome b (389 aa).

The next 8 helical transmembrane spans lie at 32-52, 76-98, 113-133, 179-199, 225-245, 290-310, 325-345, and 353-373; these read FGFF…LLAM, WLLR…IHML, LWVS…LGYV, FFSL…LHII, FTIK…TFVF, LGVL…FLTI, LFWS…QPAA, and LYST…IYIV. Positions 82 and 96 each coordinate heme b. Positions 183 and 197 each coordinate heme b.

This sequence belongs to the cytochrome b family. As to quaternary structure, the main subunits of complex b-c1 are: cytochrome b, cytochrome c1 and the Rieske protein. The cofactor is heme b.

It is found in the mitochondrion inner membrane. Its function is as follows. Component of the ubiquinol-cytochrome c reductase complex (complex III or cytochrome b-c1 complex) that is part of the mitochondrial respiratory chain. The b-c1 complex mediates electron transfer from ubiquinol to cytochrome c. Contributes to the generation of a proton gradient across the mitochondrial membrane that is then used for ATP synthesis. The sequence is that of Cytochrome b (cytB) from Dictyostelium discoideum (Social amoeba).